A 90-amino-acid polypeptide reads, in one-letter code: uncharacterized protein (90 aa).

This is an uncharacterized protein from Saccharomyces cerevisiae (strain ATCC 204508 / S288c) (Baker's yeast).